The primary structure comprises 446 residues: WD repeat domain phosphoinositide-interacting protein 1 (446 aa).

Residues 131–136 (LLKTVL) carry the Nuclear receptor interaction motif. A WD 1 repeat occupies 184 to 224 (AHEGTLAAITFNSSGSKLASASEKGTVIRVFSVPEGQKLYE). A L/FRRG motif motif is present at residues 225 to 228 (FRRG). 2 WD repeats span residues 230–269 (KRYV…DSRP) and 312–351 (SGQK…GGEC). The disordered stretch occupies residues 386–406 (ARPSTSAASTVPGYSEDGGAL).

It belongs to the WD repeat PROPPIN family. As to quaternary structure, interacts with androgen receptor (AR) and the estrogen receptors ESR1 and ESR2. Interacts with WIPI2. Interacts with WDR45. Interacts with ATG16L1. May interact with NUDC.

It is found in the golgi apparatus. Its subcellular location is the trans-Golgi network. It localises to the endosome. The protein localises to the cytoplasmic vesicle. The protein resides in the clathrin-coated vesicle. It is found in the preautophagosomal structure membrane. Its subcellular location is the cytoplasm. It localises to the cytoskeleton. Functionally, component of the autophagy machinery that controls the major intracellular degradation process by which cytoplasmic materials are packaged into autophagosomes and delivered to lysosomes for degradation. Plays an important role in starvation- and calcium-mediated autophagy, as well as in mitophagy. Functions downstream of the ULK1 and PI3-kinases that produce phosphatidylinositol 3-phosphate (PtdIns3P) on membranes of the endoplasmic reticulum once activated. Binds phosphatidylinositol 3-phosphate (PtdIns3P), and maybe other phosphoinositides including PtdIns3,5P2 and PtdIns5P, and is recruited to phagophore assembly sites at the endoplasmic reticulum membranes. There, it assists WIPI2 in the recruitment of ATG12-ATG5-ATG16L1, a complex that directly controls the elongation of the nascent autophagosomal membrane. Together with WDR45/WIPI4, promotes ATG2 (ATG2A or ATG2B)-mediated lipid transfer by enhancing ATG2-association with phosphatidylinositol 3-monophosphate (PI3P)-containing membranes. Involved in xenophagy of Staphylococcus aureus. Invading S.aureus cells become entrapped in autophagosome-like WIPI1 positive vesicles targeted for lysosomal degradation. Also plays a distinct role in controlling the transcription of melanogenic enzymes and melanosome maturation, a process that is distinct from starvation-induced autophagy. May also regulate the trafficking of proteins involved in the mannose-6-phosphate receptor (MPR) recycling pathway. The sequence is that of WD repeat domain phosphoinositide-interacting protein 1 (Wipi1) from Mus musculus (Mouse).